The chain runs to 298 residues: Lipoyl synthase (298 aa).

[4Fe-4S] cluster contacts are provided by cysteine 40, cysteine 45, cysteine 51, cysteine 67, cysteine 71, cysteine 74, and serine 280. The region spanning 53–269 (AVRKTATFMI…KEIALSKGFS (217 aa)) is the Radical SAM core domain.

The protein belongs to the radical SAM superfamily. Lipoyl synthase family. Requires [4Fe-4S] cluster as cofactor.

The protein localises to the cytoplasm. The enzyme catalyses [[Fe-S] cluster scaffold protein carrying a second [4Fe-4S](2+) cluster] + N(6)-octanoyl-L-lysyl-[protein] + 2 oxidized [2Fe-2S]-[ferredoxin] + 2 S-adenosyl-L-methionine + 4 H(+) = [[Fe-S] cluster scaffold protein] + N(6)-[(R)-dihydrolipoyl]-L-lysyl-[protein] + 4 Fe(3+) + 2 hydrogen sulfide + 2 5'-deoxyadenosine + 2 L-methionine + 2 reduced [2Fe-2S]-[ferredoxin]. It functions in the pathway protein modification; protein lipoylation via endogenous pathway; protein N(6)-(lipoyl)lysine from octanoyl-[acyl-carrier-protein]. Catalyzes the radical-mediated insertion of two sulfur atoms into the C-6 and C-8 positions of the octanoyl moiety bound to the lipoyl domains of lipoate-dependent enzymes, thereby converting the octanoylated domains into lipoylated derivatives. The sequence is that of Lipoyl synthase from Bacillus anthracis (strain A0248).